Reading from the N-terminus, the 453-residue chain is Phosphoglucosamine mutase (453 aa).

Residue Ser102 is the Phosphoserine intermediate of the active site. Ser102, Asp243, Asp245, and Asp247 together coordinate Mg(2+). Ser102 carries the phosphoserine modification.

The protein belongs to the phosphohexose mutase family. Mg(2+) is required as a cofactor. Activated by phosphorylation.

The catalysed reaction is alpha-D-glucosamine 1-phosphate = D-glucosamine 6-phosphate. In terms of biological role, catalyzes the conversion of glucosamine-6-phosphate to glucosamine-1-phosphate. This chain is Phosphoglucosamine mutase, found in Bartonella tribocorum (strain CIP 105476 / IBS 506).